The sequence spans 102 residues: NADH-quinone oxidoreductase subunit K (102 aa).

The next 3 membrane-spanning stretches (helical) occupy residues 5 to 25 (LEHY…GIFL), 31 to 51 (IVIL…LVAF), and 66 to 86 (FVLT…VVFF).

Belongs to the complex I subunit 4L family. As to quaternary structure, NDH-1 is composed of 14 different subunits. Subunits NuoA, H, J, K, L, M, N constitute the membrane sector of the complex.

The protein resides in the cell inner membrane. It carries out the reaction a quinone + NADH + 5 H(+)(in) = a quinol + NAD(+) + 4 H(+)(out). In terms of biological role, NDH-1 shuttles electrons from NADH, via FMN and iron-sulfur (Fe-S) centers, to quinones in the respiratory chain. The immediate electron acceptor for the enzyme in this species is believed to be ubiquinone. Couples the redox reaction to proton translocation (for every two electrons transferred, four hydrogen ions are translocated across the cytoplasmic membrane), and thus conserves the redox energy in a proton gradient. This chain is NADH-quinone oxidoreductase subunit K, found in Parvibaculum lavamentivorans (strain DS-1 / DSM 13023 / NCIMB 13966).